The following is a 233-amino-acid chain: Methylthioribulose-1-phosphate dehydratase (233 aa).

Substrate is bound at residue cysteine 91. Zn(2+) is bound by residues histidine 108 and histidine 110. The active-site Proton donor/acceptor is the glutamate 137. Histidine 194 provides a ligand contact to Zn(2+).

This sequence belongs to the aldolase class II family. MtnB subfamily. It depends on Zn(2+) as a cofactor.

Its subcellular location is the cytoplasm. It carries out the reaction 5-(methylsulfanyl)-D-ribulose 1-phosphate = 5-methylsulfanyl-2,3-dioxopentyl phosphate + H2O. The protein operates within amino-acid biosynthesis; L-methionine biosynthesis via salvage pathway; L-methionine from S-methyl-5-thio-alpha-D-ribose 1-phosphate: step 2/6. Its function is as follows. Catalyzes the dehydration of methylthioribulose-1-phosphate (MTRu-1-P) into 2,3-diketo-5-methylthiopentyl-1-phosphate (DK-MTP-1-P). The protein is Methylthioribulose-1-phosphate dehydratase of Phaeosphaeria nodorum (strain SN15 / ATCC MYA-4574 / FGSC 10173) (Glume blotch fungus).